The sequence spans 189 residues: Protein GrpE (189 aa).

The tract at residues 1–24 (MADEQNLDTQNPEAQAAENAAPSD) is disordered. Residues 10–24 (QNPEAQAAENAAPSD) are compositionally biased toward low complexity.

Belongs to the GrpE family. As to quaternary structure, homodimer.

It localises to the cytoplasm. In terms of biological role, participates actively in the response to hyperosmotic and heat shock by preventing the aggregation of stress-denatured proteins, in association with DnaK and GrpE. It is the nucleotide exchange factor for DnaK and may function as a thermosensor. Unfolded proteins bind initially to DnaJ; upon interaction with the DnaJ-bound protein, DnaK hydrolyzes its bound ATP, resulting in the formation of a stable complex. GrpE releases ADP from DnaK; ATP binding to DnaK triggers the release of the substrate protein, thus completing the reaction cycle. Several rounds of ATP-dependent interactions between DnaJ, DnaK and GrpE are required for fully efficient folding. The protein is Protein GrpE of Ectopseudomonas mendocina (strain ymp) (Pseudomonas mendocina).